We begin with the raw amino-acid sequence, 495 residues long: DNA-directed RNA polymerase subunit alpha (495 aa).

Residues Met1–Pro301 form an alpha N-terminal domain (alpha-NTD) region. Disordered stretches follow at residues Ser159 to His227 and Gln391 to Thr495. The tract at residues Pro170–Thr237 is insert. Positions Asp172 to Ser186 are enriched in basic and acidic residues. 2 stretches are compositionally biased toward polar residues: residues Val207–Thr219 and Gln391–Ala403. Residues Ala317–Thr495 form an alpha C-terminal domain (alpha-CTD) region. Residues Arg417–Arg426 are compositionally biased toward basic and acidic residues. Basic residues predominate over residues Arg444 to Ala453. Composition is skewed to polar residues over residues Lys464–Glu473 and Leu486–Thr495.

The protein belongs to the RNA polymerase alpha chain family. In terms of assembly, in plastids the minimal PEP RNA polymerase catalytic core is composed of four subunits: alpha, beta, beta', and beta''. When a (nuclear-encoded) sigma factor is associated with the core the holoenzyme is formed, which can initiate transcription.

Its subcellular location is the plastid. It localises to the chloroplast. It catalyses the reaction RNA(n) + a ribonucleoside 5'-triphosphate = RNA(n+1) + diphosphate. DNA-dependent RNA polymerase catalyzes the transcription of DNA into RNA using the four ribonucleoside triphosphates as substrates. In Nephroselmis olivacea (Green alga), this protein is DNA-directed RNA polymerase subunit alpha.